The chain runs to 288 residues: UTP--glucose-1-phosphate uridylyltransferase (288 aa).

It belongs to the UDPGP type 2 family.

The catalysed reaction is alpha-D-glucose 1-phosphate + UTP + H(+) = UDP-alpha-D-glucose + diphosphate. The protein operates within glycolipid metabolism; diglucosyl-diacylglycerol biosynthesis. Catalyzes the formation of UDP-glucose from glucose-1-phosphate and UTP. This is an intermediate step in the biosynthesis of diglucosyl-diacylglycerol (Glc2-DAG), i.e. a glycolipid found in the membrane, which is also used as a membrane anchor for lipoteichoic acid (LTA). The polypeptide is UTP--glucose-1-phosphate uridylyltransferase (gtaB) (Staphylococcus epidermidis (strain ATCC 35984 / DSM 28319 / BCRC 17069 / CCUG 31568 / BM 3577 / RP62A)).